The following is a 202-amino-acid chain: Small ribosomal subunit protein uS4 (202 aa).

The segment at 22–43 (TRKSARRAYPPGQHGQNRKKRS) is disordered. Residues 90–152 (MRLDNTVFRL…AQSRKLVEAN (63 aa)) enclose the S4 RNA-binding domain.

Belongs to the universal ribosomal protein uS4 family. Part of the 30S ribosomal subunit. Contacts protein S5. The interaction surface between S4 and S5 is involved in control of translational fidelity.

One of the primary rRNA binding proteins, it binds directly to 16S rRNA where it nucleates assembly of the body of the 30S subunit. Its function is as follows. With S5 and S12 plays an important role in translational accuracy. The chain is Small ribosomal subunit protein uS4 from Nostoc punctiforme (strain ATCC 29133 / PCC 73102).